Reading from the N-terminus, the 131-residue chain is Riboflavin kinase (131 aa).

11 to 16 (GLQKAG) provides a ligand contact to CDP. Mg(2+)-binding residues include Thr40 and Asn42. The FMN site is built by Thr98 and Glu106. Residue 111–114 (EKLR) participates in CDP binding.

The protein belongs to the archaeal riboflavin kinase family. It depends on Mg(2+) as a cofactor.

The enzyme catalyses riboflavin + CTP = CDP + FMN + H(+). It functions in the pathway cofactor biosynthesis; FMN biosynthesis; FMN from riboflavin (CTP route): step 1/1. Catalyzes the CTP-dependent phosphorylation of riboflavin (vitamin B2) to form flavin mononucleotide (FMN). This is Riboflavin kinase from Methanosphaera stadtmanae (strain ATCC 43021 / DSM 3091 / JCM 11832 / MCB-3).